Here is a 513-residue protein sequence, read N- to C-terminus: Ribonuclease Y (513 aa).

The chain crosses the membrane as a helical span at residues 6–26 (YIIIAVVIIIICVILGLYVVD). The region spanning 203 to 288 (TVHVVNLPND…EMVEKAKKEV (86 aa)) is the KH domain. The 94-residue stretch at 329–422 (VLKHSIEVSH…VQAADAISAA (94 aa)) folds into the HD domain.

Belongs to the RNase Y family.

It localises to the cell membrane. Endoribonuclease that initiates mRNA decay. The sequence is that of Ribonuclease Y from Clostridium botulinum (strain Langeland / NCTC 10281 / Type F).